The primary structure comprises 508 residues: DNA-directed RNA polymerase subunit alpha (508 aa).

The tract at residues methionine 1–histidine 380 is alpha N-terminal domain (alpha-NTD). The tract at residues asparagine 434–serine 508 is alpha C-terminal domain (alpha-CTD).

The protein belongs to the RNA polymerase alpha chain family. In plastids the minimal PEP RNA polymerase catalytic core is composed of four subunits: alpha, beta, beta', and beta''. When a (nuclear-encoded) sigma factor is associated with the core the holoenzyme is formed, which can initiate transcription.

The protein resides in the plastid. It localises to the chloroplast. The catalysed reaction is RNA(n) + a ribonucleoside 5'-triphosphate = RNA(n+1) + diphosphate. Functionally, DNA-dependent RNA polymerase catalyzes the transcription of DNA into RNA using the four ribonucleoside triphosphates as substrates. The chain is DNA-directed RNA polymerase subunit alpha (rpoA) from Oltmannsiellopsis viridis (Marine flagellate).